The sequence spans 328 residues: Malate dehydrogenase (328 aa).

Position 11-17 (11-17 (GAAGQIG)) interacts with NAD(+). Substrate-binding residues include R92 and R98. Residues N105, Q112, and 129–131 (VGN) contribute to the NAD(+) site. 2 residues coordinate substrate: N131 and R162. The Proton acceptor role is filled by H187.

It belongs to the LDH/MDH superfamily. MDH type 2 family.

It carries out the reaction (S)-malate + NAD(+) = oxaloacetate + NADH + H(+). In terms of biological role, catalyzes the reversible oxidation of malate to oxaloacetate. This chain is Malate dehydrogenase, found in Coxiella burnetii (strain RSA 493 / Nine Mile phase I).